Reading from the N-terminus, the 138-residue chain is Endoribonuclease YbeY (138 aa).

Positions 106, 110, and 116 each coordinate Zn(2+).

This sequence belongs to the endoribonuclease YbeY family. The cofactor is Zn(2+).

The protein localises to the cytoplasm. Its function is as follows. Single strand-specific metallo-endoribonuclease involved in late-stage 70S ribosome quality control and in maturation of the 3' terminus of the 16S rRNA. The chain is Endoribonuclease YbeY from Phocaeicola vulgatus (strain ATCC 8482 / DSM 1447 / JCM 5826 / CCUG 4940 / NBRC 14291 / NCTC 11154) (Bacteroides vulgatus).